The chain runs to 191 residues: Ribonuclease M5 1 (191 aa).

A Toprim domain is found at 10 to 93 (KEVIVVEGKD…AFLTKHDAAP (84 aa)). Mg(2+) contacts are provided by Glu16, Asp62, and Asp64.

This sequence belongs to the ribonuclease M5 family. Mg(2+) serves as cofactor.

The protein localises to the cytoplasm. The catalysed reaction is Endonucleolytic cleavage of RNA, removing 21 and 42 nucleotides, respectively, from the 5'- and 3'-termini of a 5S-rRNA precursor.. Functionally, required for correct processing of both the 5' and 3' ends of 5S rRNA precursor. Cleaves both sides of a double-stranded region yielding mature 5S rRNA in one step. This is Ribonuclease M5 1 from Ligilactobacillus salivarius (strain CECT 5713) (Lactobacillus salivarius).